The sequence spans 351 residues: Increased glyphosate resistance protein (351 aa).

Positions 1–18 (MHREDDSTSTGRREERLS) are enriched in basic and acidic residues. A disordered region spans residues 1 to 29 (MHREDDSTSTGRREERLSTGKGDSLQPGP).

Functionally, confers an increase in glyphosate resistance when expressed in E.coli. The chain is Increased glyphosate resistance protein from Pseudomonas sp. (strain PG2982).